Reading from the N-terminus, the 546-residue chain is Chaperonin GroEL (546 aa).

ATP is bound by residues 30 to 33 (TLGP), K51, 87 to 91 (DGTTT), G415, 479 to 481 (NAA), and D495. The interval 526 to 546 (KKDEPAMPAGGGMGGMGGMDF) is disordered. The segment covering 534–546 (AGGGMGGMGGMDF) has biased composition (gly residues).

The protein belongs to the chaperonin (HSP60) family. As to quaternary structure, forms a cylinder of 14 subunits composed of two heptameric rings stacked back-to-back. Interacts with the co-chaperonin GroES.

Its subcellular location is the cytoplasm. The catalysed reaction is ATP + H2O + a folded polypeptide = ADP + phosphate + an unfolded polypeptide.. Together with its co-chaperonin GroES, plays an essential role in assisting protein folding. The GroEL-GroES system forms a nano-cage that allows encapsulation of the non-native substrate proteins and provides a physical environment optimized to promote and accelerate protein folding. The polypeptide is Chaperonin GroEL (Xanthomonas oryzae pv. oryzae (strain MAFF 311018)).